The following is a 400-amino-acid chain: tRNA-specific 2-thiouridylase MnmA (400 aa).

ATP-binding positions include 19–26 and L45; that span reads AMSGGVDS. The active-site Nucleophile is the C113. C113 and C210 are disulfide-bonded. G137 contacts ATP. Residues 160–162 form an interaction with tRNA region; the sequence is RDQ. C210 functions as the Cysteine persulfide intermediate in the catalytic mechanism.

It belongs to the MnmA/TRMU family.

Its subcellular location is the cytoplasm. The enzyme catalyses S-sulfanyl-L-cysteinyl-[protein] + uridine(34) in tRNA + AH2 + ATP = 2-thiouridine(34) in tRNA + L-cysteinyl-[protein] + A + AMP + diphosphate + H(+). Functionally, catalyzes the 2-thiolation of uridine at the wobble position (U34) of tRNA, leading to the formation of s(2)U34. The chain is tRNA-specific 2-thiouridylase MnmA from Nitrobacter winogradskyi (strain ATCC 25391 / DSM 10237 / CIP 104748 / NCIMB 11846 / Nb-255).